The chain runs to 169 residues: Ureidoglycolate lyase (169 aa).

It belongs to the ureidoglycolate lyase family. As to quaternary structure, homodimer. Ni(2+) serves as cofactor.

The enzyme catalyses (S)-ureidoglycolate = urea + glyoxylate. Its pathway is nitrogen metabolism; (S)-allantoin degradation. Functionally, catalyzes the catabolism of the allantoin degradation intermediate (S)-ureidoglycolate, generating urea and glyoxylate. Involved in the utilization of allantoin as nitrogen source. The protein is Ureidoglycolate lyase of Pseudomonas paraeruginosa (strain DSM 24068 / PA7) (Pseudomonas aeruginosa (strain PA7)).